Here is a 284-residue protein sequence, read N- to C-terminus: Polyamine aminopropyltransferase (284 aa).

Positions 2–237 (ELWYTEQHTE…GHWLFGFASK (236 aa)) constitute a PABS domain. Residue Gln31 coordinates S-methyl-5'-thioadenosine. His62 and Asp86 together coordinate spermidine. Residues Glu106 and 137–138 (DG) each bind S-methyl-5'-thioadenosine. Catalysis depends on Asp155, which acts as the Proton acceptor. 155-158 (DSTD) is a spermidine binding site. An S-methyl-5'-thioadenosine-binding site is contributed by Pro162.

The protein belongs to the spermidine/spermine synthase family. In terms of assembly, homodimer or homotetramer.

The protein resides in the cytoplasm. It carries out the reaction S-adenosyl 3-(methylsulfanyl)propylamine + putrescine = S-methyl-5'-thioadenosine + spermidine + H(+). It functions in the pathway amine and polyamine biosynthesis; spermidine biosynthesis; spermidine from putrescine: step 1/1. Functionally, catalyzes the irreversible transfer of a propylamine group from the amino donor S-adenosylmethioninamine (decarboxy-AdoMet) to putrescine (1,4-diaminobutane) to yield spermidine. This is Polyamine aminopropyltransferase from Clostridium beijerinckii (strain ATCC 51743 / NCIMB 8052) (Clostridium acetobutylicum).